Here is a 156-residue protein sequence, read N- to C-terminus: ATP synthase subunit b (156 aa).

A helical membrane pass occupies residues 7 to 27; sequence LFAQMIVFFVLWWVVARFVWP.

It belongs to the ATPase B chain family. As to quaternary structure, F-type ATPases have 2 components, F(1) - the catalytic core - and F(0) - the membrane proton channel. F(1) has five subunits: alpha(3), beta(3), gamma(1), delta(1), epsilon(1). F(0) has three main subunits: a(1), b(2) and c(10-14). The alpha and beta chains form an alternating ring which encloses part of the gamma chain. F(1) is attached to F(0) by a central stalk formed by the gamma and epsilon chains, while a peripheral stalk is formed by the delta and b chains.

It is found in the cell membrane. Its function is as follows. F(1)F(0) ATP synthase produces ATP from ADP in the presence of a proton or sodium gradient. F-type ATPases consist of two structural domains, F(1) containing the extramembraneous catalytic core and F(0) containing the membrane proton channel, linked together by a central stalk and a peripheral stalk. During catalysis, ATP synthesis in the catalytic domain of F(1) is coupled via a rotary mechanism of the central stalk subunits to proton translocation. Component of the F(0) channel, it forms part of the peripheral stalk, linking F(1) to F(0). This is ATP synthase subunit b from Polynucleobacter asymbioticus (strain DSM 18221 / CIP 109841 / QLW-P1DMWA-1) (Polynucleobacter necessarius subsp. asymbioticus).